A 63-amino-acid polypeptide reads, in one-letter code: Arabinogalactan peptide 3 (63 aa).

The first 26 residues, 1–26 (MASRILYAAAVVAAVAVSSLAGVAYA), serve as a signal peptide directing secretion. The GPI-anchor amidated serine moiety is linked to residue Ser36. A propeptide spans 37-63 (GAAAVSSSLVAAVLCPAVALLLGNLRQ) (removed in mature form).

It belongs to the AG-peptide AGP family. Post-translationally, O-glycosylated on hydroxyprolines; noncontiguous hydroxylproline residues are glycosylated with arabinogalactan. As to expression, expressed in roots, stems, leaves, flowers and seeds.

It localises to the vacuole. Its subcellular location is the aleurone grain membrane. In terms of biological role, proteoglycan that seems to be implicated in diverse developmental roles such as differentiation, cell-cell recognition, embryogenesis and programmed cell death. This is Arabinogalactan peptide 3 (AGPEP3) from Oryza sativa subsp. japonica (Rice).